The sequence spans 398 residues: Phosphoglycerate kinase (398 aa).

Residues Asp21–Asn23, Arg36, His59–Arg62, Arg119, and Arg157 contribute to the substrate site. Residues Lys208, Gly296, Glu327, and Gly354–Ser357 each bind ATP.

The protein belongs to the phosphoglycerate kinase family. Monomer.

Its subcellular location is the cytoplasm. The catalysed reaction is (2R)-3-phosphoglycerate + ATP = (2R)-3-phospho-glyceroyl phosphate + ADP. The protein operates within carbohydrate degradation; glycolysis; pyruvate from D-glyceraldehyde 3-phosphate: step 2/5. The chain is Phosphoglycerate kinase from Streptococcus pneumoniae (strain 70585).